A 101-amino-acid chain; its full sequence is Toxin Tpa8 (101 aa).

A signal peptide spans 1 to 20 (MVKSEMKLVIFSLFLLLIGV). In terms of domain architecture, LCN-type CS-alpha/beta spans 24–98 (KNGYPVIEGG…VMDRTKEYCE (75 aa)). Intrachain disulfides connect Cys44–Cys70, Cys56–Cys75, Cys60–Cys77, and Cys71–Cys97.

It belongs to the long (4 C-C) scorpion toxin superfamily. Sodium channel inhibitor family. Beta subfamily. Expressed by the venom gland.

The protein resides in the secreted. Its function is as follows. Excitatory insect beta-toxins induce a spastic paralysis. They bind voltage-independently at site-4 of sodium channels (Nav) and shift the voltage of activation toward more negative potentials thereby affecting sodium channel activation and promoting spontaneous and repetitive firing. This Tityus pachyurus (Colombian scorpion) protein is Toxin Tpa8.